The following is a 156-amino-acid chain: Photosystem I reaction center subunit XI (156 aa).

2 helical membrane-spanning segments follow: residues 75 to 95 and 128 to 148; these read GGLLSAVAMISILTIALSLYA and FFIGGSGGVIFAYLLCQALYF.

This sequence belongs to the PsaL family.

The protein localises to the cellular thylakoid membrane. The protein is Photosystem I reaction center subunit XI of Crocosphaera subtropica (strain ATCC 51142 / BH68) (Cyanothece sp. (strain ATCC 51142)).